The following is a 245-amino-acid chain: 1-(5-phosphoribosyl)-5-[(5-phosphoribosylamino)methylideneamino] imidazole-4-carboxamide isomerase (245 aa).

Residue Asp7 is the Proton acceptor of the active site. Catalysis depends on Asp129, which acts as the Proton donor.

The protein belongs to the HisA/HisF family.

It localises to the cytoplasm. The enzyme catalyses 1-(5-phospho-beta-D-ribosyl)-5-[(5-phospho-beta-D-ribosylamino)methylideneamino]imidazole-4-carboxamide = 5-[(5-phospho-1-deoxy-D-ribulos-1-ylimino)methylamino]-1-(5-phospho-beta-D-ribosyl)imidazole-4-carboxamide. It functions in the pathway amino-acid biosynthesis; L-histidine biosynthesis; L-histidine from 5-phospho-alpha-D-ribose 1-diphosphate: step 4/9. This Salmonella dublin (strain CT_02021853) protein is 1-(5-phosphoribosyl)-5-[(5-phosphoribosylamino)methylideneamino] imidazole-4-carboxamide isomerase.